A 1136-amino-acid chain; its full sequence is Unconventional myosin-Ib (1136 aa).

One can recognise a Myosin motor domain in the interval 15–701 (IGVGDMVLLE…TLFKLEDLRK (687 aa)). Ser-60 is subject to Phosphoserine. Residue 108-115 (GESGAGKT) participates in ATP binding. Residue Lys-287 forms a Glycyl lysine isopeptide (Lys-Gly) (interchain with G-Cter in SUMO1); alternate linkage. Lys-287 is covalently cross-linked (Glycyl lysine isopeptide (Lys-Gly) (interchain with G-Cter in SUMO2); alternate). Residues 578 to 600 (VATLMKNLQTKNPNYIRCIKPND) form an actin-binding region. IQ domains lie at 704–733 (LEDL…SQIV), 728–748 (KKSQ…KRYQ), 750–779 (TKSS…QKRC), 779–808 (CKEA…EARN), 808–837 (NKHA…EARR), and 837–866 (RKHA…ANAG). The TH1 domain occupies 952–1136 (KALYPSSVGQ…NNRLLEVAVP (185 aa)).

It belongs to the TRAFAC class myosin-kinesin ATPase superfamily. Myosin family.

Functionally, motor protein that may participate in process critical to neuronal development and function such as cell migration, neurite outgrowth and vesicular transport. The chain is Unconventional myosin-Ib (MYO1B) from Homo sapiens (Human).